Reading from the N-terminus, the 673-residue chain is Inactive polyglycylase TTLL10 (673 aa).

The disordered stretch occupies residues 1-132; sequence MDHSCTRFIH…ADSDDTNAAG (132 aa). Basic residues predominate over residues 8–36; it reads FIHRRGPPTRTRAGFKRGKRPRIQQRPRA. Residues 52–62 are compositionally biased toward pro residues; it reads ASQPGPCPAPG. Over residues 89–105 the composition is skewed to basic and acidic residues; sequence PDHDADGHCGPDLEGAE. Residues 155–552 enclose the TTL domain; sequence PGPFFYIGGS…TFRKSLRGQK (398 aa). Residues 362–365, lysine 375, and aspartate 377 contribute to the ATP site; that span reads QRYI. The disordered stretch occupies residues 569–673; it reads EADPRPHLGG…EREEPENARP (105 aa). Residues 612–627 are compositionally biased toward pro residues; the sequence is PAPPPLVPQRPRPPGP. Over residues 661 to 673 the composition is skewed to basic and acidic residues; it reads AKEEREEPENARP.

Its function is as follows. Inactive polyglycylase. In Homo sapiens (Human), this protein is Inactive polyglycylase TTLL10.